The chain runs to 246 residues: MKQYIVLACMCLVAAAMPTSLQQSSSSCTEEENKHHMGIDVIIKVTKQDQTPTNDKICQSVTEVTETEDDEVSEEVVKGDPTTYYTIVGAGLNMNFGFTKCPKISSISESSDGNTVNTRLSSVSPGQGKDSPAITREEALAMIKDCEMSIDIRCSEEEKDSDIKTHPVLGSNISHKKVSYKDIIGSTIVDTKCVKNLEFSVRIGDMCEESSELEVKDGFKYVDGSASEGATDDTSLIDSTKLKACV.

Over residues 108-125 (SESSDGNTVNTRLSSVSP) the composition is skewed to polar residues. Residues 108–132 (SESSDGNTVNTRLSSVSPGQGKDSP) are disordered.

It belongs to the orthopoxvirus OPG001 family.

It localises to the secreted. In terms of biological role, inhibits host immune defense by binding to host chemokines. Binds host CC chemokines (beta chemokines) such as RANTES with high affinity, but not CXC or C chemokines (alpha and gamma chemokines). The chain is Chemokine-binding protein (OPG001) from Monkeypox virus.